A 523-amino-acid chain; its full sequence is UDP-glucuronosyltransferase 3A1 (523 aa).

Positions M1–A22 are cleaved as a signal peptide. Over A23–Q483 the chain is Extracellular. N52 is a glycosylation site (N-linked (GlcNAc...) asparagine). The chain crosses the membrane as a helical span at residues Y484 to G504. Residues K505–A523 lie on the Cytoplasmic side of the membrane.

Belongs to the UDP-glycosyltransferase family.

It localises to the membrane. The enzyme catalyses glucuronate acceptor + UDP-alpha-D-glucuronate = acceptor beta-D-glucuronoside + UDP + H(+). UDP-glucuronosyltransferases catalyze phase II biotransformation reactions in which lipophilic substrates are conjugated with glucuronic acid to increase water solubility and enhance excretion. They are of major importance in the conjugation and subsequent elimination of potentially toxic xenobiotics and endogenous compounds. This Bos taurus (Bovine) protein is UDP-glucuronosyltransferase 3A1 (UGT3A1).